Consider the following 61-residue polypeptide: MDPNCSCATDGSCSCAGSCKCKQCKCTSCKKSCCSCCPVGCAKCSQGCICKEASDKCSCCA.

Residue Met1 is modified to N-acetylmethionine. The segment at 1–29 (MDPNCSCATDGSCSCAGSCKCKQCKCTSC) is beta. A divalent metal cation is bound by residues Cys5, Cys7, Cys13, Cys15, Cys19, Cys21, Cys24, Cys26, Cys29, Cys33, Cys34, Cys36, Cys37, Cys41, Cys44, Cys48, Cys50, and Cys57. An alpha region spans residues 30–61 (KKSCCSCCPVGCAKCSQGCICKEASDKCSCCA). Phosphoserine is present on Ser58. Cys59 and Cys60 together coordinate a divalent metal cation.

Belongs to the metallothionein superfamily. Type 1 family.

Functionally, metallothioneins have a high content of cysteine residues that bind various heavy metals; these proteins are transcriptionally regulated by both heavy metals and glucocorticoids. This is Metallothionein-2 (Mt2) from Rattus norvegicus (Rat).